Here is a 125-residue protein sequence, read N- to C-terminus: Small ribosomal subunit protein uS12 (125 aa).

Asp-89 is subject to 3-methylthioaspartic acid.

It belongs to the universal ribosomal protein uS12 family. In terms of assembly, part of the 30S ribosomal subunit. Contacts proteins S8 and S17. May interact with IF1 in the 30S initiation complex.

Functionally, with S4 and S5 plays an important role in translational accuracy. Its function is as follows. Interacts with and stabilizes bases of the 16S rRNA that are involved in tRNA selection in the A site and with the mRNA backbone. Located at the interface of the 30S and 50S subunits, it traverses the body of the 30S subunit contacting proteins on the other side and probably holding the rRNA structure together. The combined cluster of proteins S8, S12 and S17 appears to hold together the shoulder and platform of the 30S subunit. This Clostridium botulinum (strain ATCC 19397 / Type A) protein is Small ribosomal subunit protein uS12.